Reading from the N-terminus, the 235-residue chain is Phosphoribosylaminoimidazole-succinocarboxamide synthase (235 aa).

The protein belongs to the SAICAR synthetase family.

The catalysed reaction is 5-amino-1-(5-phospho-D-ribosyl)imidazole-4-carboxylate + L-aspartate + ATP = (2S)-2-[5-amino-1-(5-phospho-beta-D-ribosyl)imidazole-4-carboxamido]succinate + ADP + phosphate + 2 H(+). It participates in purine metabolism; IMP biosynthesis via de novo pathway; 5-amino-1-(5-phospho-D-ribosyl)imidazole-4-carboxamide from 5-amino-1-(5-phospho-D-ribosyl)imidazole-4-carboxylate: step 1/2. The protein is Phosphoribosylaminoimidazole-succinocarboxamide synthase of Clostridium kluyveri (strain NBRC 12016).